We begin with the raw amino-acid sequence, 206 residues long: Cytochrome c oxidase assembly protein CtaG (206 aa).

At 1 to 12 (MSKKPAGKNSNR) the chain is on the cytoplasmic side. The chain crosses the membrane as a helical; Signal-anchor for type II membrane protein span at residues 13 to 35 (IVAAVCLAFFTGMIGMAYAAVPL). Residues 36 to 206 (YKMFCQATGY…ISDTEANLGG (171 aa)) are Periplasmic-facing. The disordered stretch occupies residues 184 to 206 (VASSEPVQGTSKIISDTEANLGG). The span at 188 to 206 (EPVQGTSKIISDTEANLGG) shows a compositional bias: polar residues.

This sequence belongs to the COX11/CtaG family.

It localises to the cell inner membrane. Its function is as follows. Exerts its effect at some terminal stage of cytochrome c oxidase synthesis, probably by being involved in the insertion of the copper B into subunit I. The chain is Cytochrome c oxidase assembly protein CtaG from Mesorhizobium japonicum (strain LMG 29417 / CECT 9101 / MAFF 303099) (Mesorhizobium loti (strain MAFF 303099)).